Consider the following 92-residue polypeptide: Small ribosomal subunit protein bS21 (92 aa).

Positions 37 to 92 are disordered; that stretch reads QREGTFREMKRRNHYEKPSEKKARQKAEAIRRARKLARKRAQREGLIAKRGGTTRR. Positions 51 to 67 are enriched in basic and acidic residues; it reads YEKPSEKKARQKAEAIR. Residues 68–77 show a composition bias toward basic residues; the sequence is RARKLARKRA.

Belongs to the bacterial ribosomal protein bS21 family.

The polypeptide is Small ribosomal subunit protein bS21 (Maricaulis maris (strain MCS10) (Caulobacter maris)).